A 270-amino-acid chain; its full sequence is Putative pyruvate, phosphate dikinase regulatory protein (270 aa).

153–160 (GVSRTSKT) contacts ADP.

The protein belongs to the pyruvate, phosphate/water dikinase regulatory protein family. PDRP subfamily.

The enzyme catalyses N(tele)-phospho-L-histidyl/L-threonyl-[pyruvate, phosphate dikinase] + ADP = N(tele)-phospho-L-histidyl/O-phospho-L-threonyl-[pyruvate, phosphate dikinase] + AMP + H(+). It carries out the reaction N(tele)-phospho-L-histidyl/O-phospho-L-threonyl-[pyruvate, phosphate dikinase] + phosphate + H(+) = N(tele)-phospho-L-histidyl/L-threonyl-[pyruvate, phosphate dikinase] + diphosphate. Bifunctional serine/threonine kinase and phosphorylase involved in the regulation of the pyruvate, phosphate dikinase (PPDK) by catalyzing its phosphorylation/dephosphorylation. The protein is Putative pyruvate, phosphate dikinase regulatory protein of Halalkalibacterium halodurans (strain ATCC BAA-125 / DSM 18197 / FERM 7344 / JCM 9153 / C-125) (Bacillus halodurans).